A 267-amino-acid chain; its full sequence is Indole-3-glycerol phosphate synthase (267 aa).

The protein belongs to the TrpC family.

It catalyses the reaction 1-(2-carboxyphenylamino)-1-deoxy-D-ribulose 5-phosphate + H(+) = (1S,2R)-1-C-(indol-3-yl)glycerol 3-phosphate + CO2 + H2O. It functions in the pathway amino-acid biosynthesis; L-tryptophan biosynthesis; L-tryptophan from chorismate: step 4/5. This chain is Indole-3-glycerol phosphate synthase, found in Deinococcus radiodurans (strain ATCC 13939 / DSM 20539 / JCM 16871 / CCUG 27074 / LMG 4051 / NBRC 15346 / NCIMB 9279 / VKM B-1422 / R1).